A 184-amino-acid polypeptide reads, in one-letter code: Putative axial regulator YABBY 2 (184 aa).

The C4-type zinc-finger motif lies at 15-42 (CSFCTTILAVSVPYASLFTLVTVRCGHC). Polar residues-rich tracts occupy residues 76–94 (LVTR…NLSE) and 171–184 (LDQS…NGYY). 2 disordered regions span residues 76 to 115 (LVTR…RQRV) and 162 to 184 (LDGN…NGYY).

It belongs to the YABBY family. As to quaternary structure, interacts with SPL/NZZ and SPEAR2. In terms of tissue distribution, expressed at low levels in abaxial regions of lateral aerial organ primordia leading to cotyledons, leaves, flower meristems, sepals, petals, stamen and carpels, but not in roots.

It is found in the nucleus. In terms of biological role, involved in the abaxial cell fate determination during embryogenesis and organogenesis. The polypeptide is Putative axial regulator YABBY 2 (YAB2) (Arabidopsis thaliana (Mouse-ear cress)).